The chain runs to 776 residues: Homoaconitase, mitochondrial (776 aa).

Residues 1–24 (MVALRRAVALNAVAIARLQTRALT) constitute a mitochondrion transit peptide. [4Fe-4S] cluster contacts are provided by Cys392, Cys459, and Cys462.

The protein belongs to the aconitase/IPM isomerase family. [4Fe-4S] cluster serves as cofactor.

It localises to the mitochondrion. The enzyme catalyses (2R,3S)-homoisocitrate = cis-homoaconitate + H2O. It functions in the pathway amino-acid biosynthesis; L-lysine biosynthesis via AAA pathway; L-alpha-aminoadipate from 2-oxoglutarate: step 3/5. Its function is as follows. Catalyzes the reversible hydration of cis-homoaconitate to (2R,3S)-homoisocitrate, a step in the alpha-aminoadipate pathway for lysine biosynthesis. The sequence is that of Homoaconitase, mitochondrial (LYS4) from Gibberella zeae (strain ATCC MYA-4620 / CBS 123657 / FGSC 9075 / NRRL 31084 / PH-1) (Wheat head blight fungus).